A 311-amino-acid polypeptide reads, in one-letter code: Malate dehydrogenase (311 aa).

NAD(+)-binding positions include 7-12 (GAGNVG) and aspartate 32. Substrate contacts are provided by arginine 82 and arginine 88. NAD(+) contacts are provided by residues asparagine 95 and 118–120 (VSN). Substrate is bound by residues asparagine 120 and arginine 151. Residue histidine 175 is the Proton acceptor of the active site.

The protein belongs to the LDH/MDH superfamily. MDH type 3 family.

The catalysed reaction is (S)-malate + NAD(+) = oxaloacetate + NADH + H(+). Its function is as follows. Catalyzes the reversible oxidation of malate to oxaloacetate. In Flavobacterium johnsoniae (strain ATCC 17061 / DSM 2064 / JCM 8514 / BCRC 14874 / CCUG 350202 / NBRC 14942 / NCIMB 11054 / UW101) (Cytophaga johnsonae), this protein is Malate dehydrogenase.